A 206-amino-acid polypeptide reads, in one-letter code: CASP-like protein 4B2 (206 aa).

Low complexity-rich tracts occupy residues 1–12 and 24–36; these read MAMVPADADAAA and SSQNGAPNSAAAA. Positions 1–42 are disordered; it reads MAMVPADADAAAKPPPDVEKPDYSSQNGAPNSAAAAAGGGGG. The Cytoplasmic portion of the chain corresponds to 1–60; that stretch reads MAMVPADADAAAKPPPDVEKPDYSSQNGAPNSAAAAAGGGGGGVVDSVVARWRREDMLDK. Residues 61 to 81 form a helical membrane-spanning segment; it reads SPLALHAAAAAFAFVALVLVA. The Extracellular segment spans residues 82-99; that stretch reads SNQHGDWMEFDRYQEYRY. The chain crosses the membrane as a helical span at residues 100–120; the sequence is LLAIAALAFAYSLAQALRHAL. At 121–138 the chain is on the cytoplasmic side; that stretch reads RMRRGVDPVPTASGRLLD. The chain crosses the membrane as a helical span at residues 139 to 159; sequence FASDQVVAYLLMSALSAATPI. Over 160-174 the chain is Extracellular; it reads TNRMRSAVINRFTDT. A helical transmembrane segment spans residues 175–195; it reads TAAAISMAFLAFVSLALSAIV. The Cytoplasmic segment spans residues 196–206; sequence SGYKLSKQTYM.

This sequence belongs to the Casparian strip membrane proteins (CASP) family. In terms of assembly, homodimer and heterodimers.

It localises to the cell membrane. This Oryza sativa subsp. japonica (Rice) protein is CASP-like protein 4B2.